The following is a 417-amino-acid chain: Putative transporter AmpG 1 (417 aa).

12 consecutive transmembrane segments (helical) span residues 7-27 (LCIIWLFGLISGFNLMITGNT), 42-62 (IGILSFITLPYSINFLLAPIF), 78-98 (LSWICLTSSALIFLIYIFSFL), 104-124 (LLLFAFTALIISFFSAAQDTI), 143-163 (GIYIFGYRVGMLLAGSGAIYL), 171-191 (EIYKIFAGLVFIYLILLIVGI), 225-245 (ALKPIGSVYFIILILIFLVLY), 273-293 (VGKFCGVVGAIIGGLVGGVIM), 301-321 (SIFLFGIIHALGHILFIFLEI), 328-348 (LLFITIGIASITGGMTMTAYI), 366-386 (FLSSMMGISRSIFPIISGYMV), and 389-409 (FGWQNFFLFTTIITIPSLLIL).

Belongs to the major facilitator superfamily.

The protein resides in the cell inner membrane. The polypeptide is Putative transporter AmpG 1 (ampG1) (Rickettsia conorii (strain ATCC VR-613 / Malish 7)).